Consider the following 98-residue polypeptide: Large ribosomal subunit protein eL30 (98 aa).

This sequence belongs to the eukaryotic ribosomal protein eL30 family.

In Methanosphaera stadtmanae (strain ATCC 43021 / DSM 3091 / JCM 11832 / MCB-3), this protein is Large ribosomal subunit protein eL30.